The chain runs to 342 residues: Methionine import ATP-binding protein MetN 3 (342 aa).

The region spanning 2–241 (ISLKGISKTF…PKEQMTKEFV (240 aa)) is the ABC transporter domain. 38–45 (GYSGAGKS) contributes to the ATP binding site.

It belongs to the ABC transporter superfamily. Methionine importer (TC 3.A.1.24) family. In terms of assembly, the complex is composed of two ATP-binding proteins (MetN), two transmembrane proteins (MetI) and a solute-binding protein (MetQ).

Its subcellular location is the cell membrane. It carries out the reaction L-methionine(out) + ATP + H2O = L-methionine(in) + ADP + phosphate + H(+). The catalysed reaction is D-methionine(out) + ATP + H2O = D-methionine(in) + ADP + phosphate + H(+). Its function is as follows. Part of the ABC transporter complex MetNIQ involved in methionine import. Responsible for energy coupling to the transport system. In Shouchella clausii (strain KSM-K16) (Alkalihalobacillus clausii), this protein is Methionine import ATP-binding protein MetN 3.